The chain runs to 316 residues: MSDISKASLPKAIFLMGPTASGKTALAIELRKILPVELISVDSALIYKGMDIGTAKPNAEELLAAPHRLLNIRDPSQAYSAADFRRDALAEMADITAAGRIPLLVGGTMLYFKALLEGLSPLPSADPEVRARIEQQAAEQGWESLHRQLQEIDPVAAARIHPNDPQRLSRALEVFFISGKTLPELTQTSGDALPYQVHQFAIAPASRELLHQRIEQRFHQMLASGFEAEVRALFARGDLHTDLPSIRCVGYRQMWSYLEGEISYDEMVYRGVCATRQLAKRQITWLRGWEGVHWLDSEKPEQARDEVLQVVGAIAG.

Residue 17-24 (GPTASGKT) coordinates ATP. 19 to 24 (TASGKT) serves as a coordination point for substrate. 4 interaction with substrate tRNA regions span residues 42 to 45 (DSAL), 166 to 170 (QRLSR), 247 to 252 (RCVGYR), and 280 to 287 (KRQITWLR).

This sequence belongs to the IPP transferase family. As to quaternary structure, monomer. Mg(2+) is required as a cofactor.

The catalysed reaction is adenosine(37) in tRNA + dimethylallyl diphosphate = N(6)-dimethylallyladenosine(37) in tRNA + diphosphate. Functionally, catalyzes the transfer of a dimethylallyl group onto the adenine at position 37 in tRNAs that read codons beginning with uridine, leading to the formation of N6-(dimethylallyl)adenosine (i(6)A). This Escherichia coli O6:K15:H31 (strain 536 / UPEC) protein is tRNA dimethylallyltransferase.